The sequence spans 26 residues: Hemocyanin subunit B (26 aa).

The protein belongs to the tyrosinase family. Hemocyanin subfamily. In terms of tissue distribution, hemolymph.

The protein resides in the secreted. It localises to the extracellular space. Functionally, hemocyanins are copper-containing oxygen carriers occurring freely dissolved in the hemolymph of many mollusks and arthropods. The polypeptide is Hemocyanin subunit B (Carcinus maenas (Common shore crab)).